Here is a 160-residue protein sequence, read N- to C-terminus: MCGLGIVPMVKPALFGMLILVIGTSTVQAEECWSLLNTPDWSKIKAAIEQIKVCEALPEGPNRTRRFEATQIDICSAPEGFRVRSKVEVTCATSDAAFIRFSVKGAVTPDVTVDVGACRITSLDLDVSGDVGEYLSGLGLLQPVLRGWAQEQLNRICGKA.

The N-terminal stretch at 1–29 is a signal peptide; that stretch reads MCGLGIVPMVKPALFGMLILVIGTSTVQA.

This is an uncharacterized protein from Sinorhizobium fredii (strain NBRC 101917 / NGR234).